We begin with the raw amino-acid sequence, 309 residues long: Elongation factor Ts (309 aa).

Positions 98-101 are involved in Mg(2+) ion dislocation from EF-Tu; sequence TDFV.

Belongs to the EF-Ts family.

Its subcellular location is the cytoplasm. Its function is as follows. Associates with the EF-Tu.GDP complex and induces the exchange of GDP to GTP. It remains bound to the aminoacyl-tRNA.EF-Tu.GTP complex up to the GTP hydrolysis stage on the ribosome. The polypeptide is Elongation factor Ts (Orientia tsutsugamushi (strain Boryong) (Rickettsia tsutsugamushi)).